We begin with the raw amino-acid sequence, 131 residues long: Large ribosomal subunit protein bL17 (131 aa).

It belongs to the bacterial ribosomal protein bL17 family. Part of the 50S ribosomal subunit. Contacts protein L32.

The protein is Large ribosomal subunit protein bL17 of Thermotoga neapolitana (strain ATCC 49049 / DSM 4359 / NBRC 107923 / NS-E).